The following is a 334-amino-acid chain: Phosphoribosylformylglycinamidine cyclo-ligase (334 aa).

The protein belongs to the AIR synthase family.

It is found in the cytoplasm. It carries out the reaction 2-formamido-N(1)-(5-O-phospho-beta-D-ribosyl)acetamidine + ATP = 5-amino-1-(5-phospho-beta-D-ribosyl)imidazole + ADP + phosphate + H(+). It participates in purine metabolism; IMP biosynthesis via de novo pathway; 5-amino-1-(5-phospho-D-ribosyl)imidazole from N(2)-formyl-N(1)-(5-phospho-D-ribosyl)glycinamide: step 2/2. This Pyrococcus furiosus (strain ATCC 43587 / DSM 3638 / JCM 8422 / Vc1) protein is Phosphoribosylformylglycinamidine cyclo-ligase.